The following is a 229-amino-acid chain: Non-structural protein P8 (229 aa).

A run of 2 helical transmembrane segments spans residues 119-139 and 162-182; these read IIHMTLLIAAVVALLTSVCTL and SLNPMLGVVNLGATFLMMVCA.

This sequence belongs to the orbivirus NS3 family. In terms of assembly, forms homooligomers via coiled-coil motif. Interacts with host OPTN; this interaction inhibits innate immune response.

The protein localises to the host cell membrane. It localises to the host Golgi apparatus. In terms of biological role, plays a role in the inhibition of host innate immune response. Interacts with host OPTN and thus inhibits the recruitment of TBK1 to the host Golgi apparatus. In turn, downstream partner IRF3 cannot be activated and IFN-beta production is impaired. Facilitates viral particle release either by increasing plasma membrane permeability through a viroporin-like activity or by viral budding. The polypeptide is Non-structural protein P8 (Segment-10) (Bluetongue virus 17 (isolate USA) (BTV 17)).